A 470-amino-acid polypeptide reads, in one-letter code: Pre-mycofactocin glycosyltransferase (470 aa).

The chain crosses the membrane as a helical span at residues 315–335; that stretch reads LVISGGALMAWILMSIGTGLG.

This sequence belongs to the glycosyltransferase 2 family.

The protein resides in the cell membrane. Its function is as follows. Involved in the biosynthesis of the enzyme cofactor mycofactocin (MFT). Acts as a glycosyltransferase that catalyzes the oligoglycosylation of pre-mycofactocin (PMFT), adding up to nine beta-1,4-linked glucose residues. Is required for the in vivo ethanol assimilation in M.smegmatis. This Mycobacterium tuberculosis (strain CDC 1551 / Oshkosh) protein is Pre-mycofactocin glycosyltransferase (mftF).